Consider the following 311-residue polypeptide: Methionyl-tRNA formyltransferase (311 aa).

Residue 112 to 115 (SLLP) coordinates (6S)-5,6,7,8-tetrahydrofolate.

Belongs to the Fmt family.

It catalyses the reaction L-methionyl-tRNA(fMet) + (6R)-10-formyltetrahydrofolate = N-formyl-L-methionyl-tRNA(fMet) + (6S)-5,6,7,8-tetrahydrofolate + H(+). Functionally, attaches a formyl group to the free amino group of methionyl-tRNA(fMet). The formyl group appears to play a dual role in the initiator identity of N-formylmethionyl-tRNA by promoting its recognition by IF2 and preventing the misappropriation of this tRNA by the elongation apparatus. In Rhizobium meliloti (strain 1021) (Ensifer meliloti), this protein is Methionyl-tRNA formyltransferase.